Reading from the N-terminus, the 225-residue chain is NAD(P)H-quinone oxidoreductase subunit K, chloroplastic (225 aa).

Residues Cys43, Cys44, Cys108, and Cys139 each contribute to the [4Fe-4S] cluster site.

Belongs to the complex I 20 kDa subunit family. In terms of assembly, NDH is composed of at least 16 different subunits, 5 of which are encoded in the nucleus. The cofactor is [4Fe-4S] cluster.

It is found in the plastid. It localises to the chloroplast thylakoid membrane. The catalysed reaction is a plastoquinone + NADH + (n+1) H(+)(in) = a plastoquinol + NAD(+) + n H(+)(out). It catalyses the reaction a plastoquinone + NADPH + (n+1) H(+)(in) = a plastoquinol + NADP(+) + n H(+)(out). NDH shuttles electrons from NAD(P)H:plastoquinone, via FMN and iron-sulfur (Fe-S) centers, to quinones in the photosynthetic chain and possibly in a chloroplast respiratory chain. The immediate electron acceptor for the enzyme in this species is believed to be plastoquinone. Couples the redox reaction to proton translocation, and thus conserves the redox energy in a proton gradient. In Arabis hirsuta (Hairy rock-cress), this protein is NAD(P)H-quinone oxidoreductase subunit K, chloroplastic.